The following is a 385-amino-acid chain: Acetate kinase (385 aa).

Asn-9 provides a ligand contact to Mg(2+). Lys-16 contributes to the ATP binding site. A substrate-binding site is contributed by Arg-75. The Proton donor/acceptor role is filled by Asp-132. Residues 192-196 (HLGNG), 266-268 (DFR), and 314-318 (GIGEN) contribute to the ATP site. Residue Glu-368 coordinates Mg(2+).

It belongs to the acetokinase family. As to quaternary structure, homodimer. Mg(2+) is required as a cofactor. Requires Mn(2+) as cofactor.

It is found in the cytoplasm. It catalyses the reaction acetate + ATP = acetyl phosphate + ADP. Its pathway is metabolic intermediate biosynthesis; acetyl-CoA biosynthesis; acetyl-CoA from acetate: step 1/2. Its function is as follows. Catalyzes the formation of acetyl phosphate from acetate and ATP. Can also catalyze the reverse reaction. The polypeptide is Acetate kinase (Mycobacterium bovis (strain ATCC BAA-935 / AF2122/97)).